Here is a 246-residue protein sequence, read N- to C-terminus: Pyridoxine 5'-phosphate synthase (246 aa).

Residue N12 participates in 3-amino-2-oxopropyl phosphate binding. 14 to 15 lines the 1-deoxy-D-xylulose 5-phosphate pocket; it reads DH. R23 is a 3-amino-2-oxopropyl phosphate binding site. Residue H48 is the Proton acceptor of the active site. Residues R50 and H55 each coordinate 1-deoxy-D-xylulose 5-phosphate. The active-site Proton acceptor is E75. T105 contributes to the 1-deoxy-D-xylulose 5-phosphate binding site. Residue H196 is the Proton donor of the active site. Residues G197 and 218–219 each bind 3-amino-2-oxopropyl phosphate; that span reads GH.

This sequence belongs to the PNP synthase family. In terms of assembly, homooctamer; tetramer of dimers.

The protein localises to the cytoplasm. It carries out the reaction 3-amino-2-oxopropyl phosphate + 1-deoxy-D-xylulose 5-phosphate = pyridoxine 5'-phosphate + phosphate + 2 H2O + H(+). It participates in cofactor biosynthesis; pyridoxine 5'-phosphate biosynthesis; pyridoxine 5'-phosphate from D-erythrose 4-phosphate: step 5/5. Its function is as follows. Catalyzes the complicated ring closure reaction between the two acyclic compounds 1-deoxy-D-xylulose-5-phosphate (DXP) and 3-amino-2-oxopropyl phosphate (1-amino-acetone-3-phosphate or AAP) to form pyridoxine 5'-phosphate (PNP) and inorganic phosphate. This is Pyridoxine 5'-phosphate synthase from Nitrosococcus oceani (strain ATCC 19707 / BCRC 17464 / JCM 30415 / NCIMB 11848 / C-107).